The following is an 800-amino-acid chain: Blood-group-substance endo-1,4-beta-galactosidase (800 aa).

Residues 1–35 (MGGVTMKNNLKKYIKYILSVILVFFVGVNGMEVYA) form the signal peptide.

This sequence belongs to the glycosyl hydrolase 98 family.

The protein resides in the secreted. The enzyme catalyses Endohydrolysis of (1-&gt;4)-beta-D-galactosidic linkages in blood group A and B substances.. Functionally, endo-beta-galactosidase capable of releasing both the blood group A trisaccharide (A-Tri; GalNAcalpha1--&gt;3(Fucalpha1--&gt;2)Gal) and B trisaccharide (B-Tri; Galalpha1--&gt;3(Fucalpha1--&gt;2)Gal) glycotopes from blood group A- and B-containing glycoconjugates, respectively. This chain is Blood-group-substance endo-1,4-beta-galactosidase (eabC), found in Clostridium perfringens.